A 366-amino-acid polypeptide reads, in one-letter code: Chorismate synthase (366 aa).

An NADP(+)-binding site is contributed by Arg48. Residues 125 to 127, 241 to 242, Gly285, 300 to 304, and Arg326 each bind FMN; these read RSS, NA, and KPTSS.

Belongs to the chorismate synthase family. As to quaternary structure, homotetramer. The cofactor is FMNH2.

It catalyses the reaction 5-O-(1-carboxyvinyl)-3-phosphoshikimate = chorismate + phosphate. Its pathway is metabolic intermediate biosynthesis; chorismate biosynthesis; chorismate from D-erythrose 4-phosphate and phosphoenolpyruvate: step 7/7. Functionally, catalyzes the anti-1,4-elimination of the C-3 phosphate and the C-6 proR hydrogen from 5-enolpyruvylshikimate-3-phosphate (EPSP) to yield chorismate, which is the branch point compound that serves as the starting substrate for the three terminal pathways of aromatic amino acid biosynthesis. This reaction introduces a second double bond into the aromatic ring system. The sequence is that of Chorismate synthase from Paracoccus denitrificans (strain Pd 1222).